Reading from the N-terminus, the 372-residue chain is Flap endonuclease 1 (372 aa).

Positions 1–105 (MGVKGLNQLI…GELEKRLLRR (105 aa)) are N-domain. Asp34 contributes to the Mg(2+) binding site. 2 residues coordinate DNA: Arg47 and Arg71. The Mg(2+) site is built by Asp87, Glu159, Glu161, Asp180, and Asp182. The tract at residues 123 to 254 (EVLKFEKRLV…ATAFKLIKEH (132 aa)) is I-domain. Glu159 is a binding site for DNA. Positions 232 and 234 each coordinate DNA. A Mg(2+)-binding site is contributed by Asp234. The tract at residues 339–347 (VQGRLDGFF) is interaction with PCNA. Over residues 353-366 (DDKKRKADPKESKA) the composition is skewed to basic and acidic residues. Residues 353 to 372 (DDKKRKADPKESKASKKKKK) are disordered.

The protein belongs to the XPG/RAD2 endonuclease family. FEN1 subfamily. In terms of assembly, interacts with PCNA. Three molecules of RAD27 bind to one PCNA trimer with each molecule binding to one PCNA monomer. PCNA stimulates the nuclease activity without altering cleavage specificity. It depends on Mg(2+) as a cofactor. Post-translationally, phosphorylated. Phosphorylation upon DNA damage induces relocalization to the nuclear plasma.

The protein localises to the nucleus. Its subcellular location is the nucleolus. It localises to the nucleoplasm. The protein resides in the mitochondrion. Functionally, structure-specific nuclease with 5'-flap endonuclease and 5'-3' exonuclease activities involved in DNA replication and repair. During DNA replication, cleaves the 5'-overhanging flap structure that is generated by displacement synthesis when DNA polymerase encounters the 5'-end of a downstream Okazaki fragment. It enters the flap from the 5'-end and then tracks to cleave the flap base, leaving a nick for ligation. Also involved in the long patch base excision repair (LP-BER) pathway, by cleaving within the apurinic/apyrimidinic (AP) site-terminated flap. Acts as a genome stabilization factor that prevents flaps from equilibrating into structures that lead to duplications and deletions. Also possesses 5'-3' exonuclease activity on nicked or gapped double-stranded DNA, and exhibits RNase H activity. Also involved in replication and repair of rDNA and in repairing mitochondrial DNA. The chain is Flap endonuclease 1 from Candida albicans (strain WO-1) (Yeast).